The following is a 159-amino-acid chain: Ribosomal RNA large subunit methyltransferase H (159 aa).

S-adenosyl-L-methionine-binding positions include leucine 76, glycine 108, and 127–132 (FSKMTF).

It belongs to the RNA methyltransferase RlmH family. Homodimer.

The protein resides in the cytoplasm. The catalysed reaction is pseudouridine(1915) in 23S rRNA + S-adenosyl-L-methionine = N(3)-methylpseudouridine(1915) in 23S rRNA + S-adenosyl-L-homocysteine + H(+). Its function is as follows. Specifically methylates the pseudouridine at position 1915 (m3Psi1915) in 23S rRNA. The protein is Ribosomal RNA large subunit methyltransferase H of Halalkalibacterium halodurans (strain ATCC BAA-125 / DSM 18197 / FERM 7344 / JCM 9153 / C-125) (Bacillus halodurans).